The sequence spans 841 residues: DNA ligase (841 aa).

Residues Asp54 to Asp58, Ser103 to Leu104, and Glu143 contribute to the NAD(+) site. Lys145 (N6-AMP-lysine intermediate) is an active-site residue. Positions 166, 203, 321, and 345 each coordinate NAD(+). Residues Cys471, Cys474, Cys489, and Cys495 each contribute to the Zn(2+) site. The disordered stretch occupies residues Lys554–His575. Over residues Gln561–Gly570 the composition is skewed to polar residues. The region spanning Gly764–Gly841 is the BRCT domain.

Belongs to the NAD-dependent DNA ligase family. LigA subfamily. Requires Mg(2+) as cofactor. Mn(2+) serves as cofactor.

The enzyme catalyses NAD(+) + (deoxyribonucleotide)n-3'-hydroxyl + 5'-phospho-(deoxyribonucleotide)m = (deoxyribonucleotide)n+m + AMP + beta-nicotinamide D-nucleotide.. Its function is as follows. DNA ligase that catalyzes the formation of phosphodiester linkages between 5'-phosphoryl and 3'-hydroxyl groups in double-stranded DNA using NAD as a coenzyme and as the energy source for the reaction. It is essential for DNA replication and repair of damaged DNA. The polypeptide is DNA ligase (Neisseria meningitidis serogroup C (strain 053442)).